Reading from the N-terminus, the 186-residue chain is Probable GTP-binding protein EngB (186 aa).

One can recognise an EngB-type G domain in the interval 18–186 (DKVEICFIGR…LKKLLASEFK (169 aa)). Residues 26 to 33 (GRSNVGKS), 52 to 56 (GRTQL), 70 to 73 (DLPG), 137 to 140 (TKID), and 166 to 168 (VSS) contribute to the GTP site. The Mg(2+) site is built by serine 33 and threonine 54.

It belongs to the TRAFAC class TrmE-Era-EngA-EngB-Septin-like GTPase superfamily. EngB GTPase family. Requires Mg(2+) as cofactor.

Functionally, necessary for normal cell division and for the maintenance of normal septation. In Mycoplasmopsis pulmonis (strain UAB CTIP) (Mycoplasma pulmonis), this protein is Probable GTP-binding protein EngB.